Consider the following 115-residue polypeptide: Nucleoid-associated protein Npun_F0448 (115 aa).

The protein belongs to the YbaB/EbfC family. As to quaternary structure, homodimer.

Its subcellular location is the cytoplasm. It is found in the nucleoid. Binds to DNA and alters its conformation. May be involved in regulation of gene expression, nucleoid organization and DNA protection. The chain is Nucleoid-associated protein Npun_F0448 from Nostoc punctiforme (strain ATCC 29133 / PCC 73102).